A 253-amino-acid polypeptide reads, in one-letter code: Demethylmenaquinone methyltransferase (253 aa).

Residues Thr75, Asp96, and 124 to 125 contribute to the S-adenosyl-L-methionine site; that span reads DA.

The protein belongs to the class I-like SAM-binding methyltransferase superfamily. MenG/UbiE family.

The enzyme catalyses a 2-demethylmenaquinol + S-adenosyl-L-methionine = a menaquinol + S-adenosyl-L-homocysteine + H(+). It participates in quinol/quinone metabolism; menaquinone biosynthesis; menaquinol from 1,4-dihydroxy-2-naphthoate: step 2/2. Its function is as follows. Methyltransferase required for the conversion of demethylmenaquinol (DMKH2) to menaquinol (MKH2). The protein is Demethylmenaquinone methyltransferase of Desulfitobacterium hafniense (strain Y51).